The primary structure comprises 271 residues: Aquaporin-1 (271 aa).

At 1-11 (MASEFKKKLFW) the chain is on the cytoplasmic side. A helical membrane pass occupies residues 12 to 29 (RAVVAEFLAMILFVFISI). Topologically, residues 30 to 48 (GSALGFNYPVRNNQTAGAA) are extracellular. Asparagine 42 carries an N-linked (GlcNAc...) asparagine glycan. A helical membrane pass occupies residues 49 to 67 (QDNVKVSLAFGLSIATLAQ). The Cytoplasmic segment spans residues 68–70 (SVG). The stretch at 71–84 (HISGAHLNPAVTLG) is an intramembrane region. An NPA 1 motif is present at residues 78-80 (NPA). Residues 85 to 92 (LLLSCQIS) are Cytoplasmic-facing. A helical transmembrane segment spans residues 93-111 (ILRAVMYIIAQCVGAIVAT). Residues 112 to 135 (AILSGITSSLPDNSLGRNELAPGV) lie on the Extracellular side of the membrane. A helical membrane pass occupies residues 136 to 155 (NSGQGLGIEIIGTLQLVLCV). At 156–165 (LATTDRRRRD) the chain is on the cytoplasmic side. Residues 166–183 (LGGSGPLAIGLSVALGHL) form a helical membrane-spanning segment. Topologically, residues 184–188 (LAIDY) are extracellular. An intramembrane segment occupies 189–201 (TGCGINPARSFGS). The NPA 2 motif lies at 194-196 (NPA). Residues 202 to 208 (SVITHNF) lie on the Extracellular side of the membrane. A helical membrane pass occupies residues 209–226 (KDHWIFWVGPFIGGALAV). The Cytoplasmic segment spans residues 227 to 271 (LIYDFILAPRSSDLTDRVKVWTSGQVEEYELDGDDINSRVEMKPK). At serine 249 the chain carries Phosphoserine. Tyrosine 255 carries the phosphotyrosine modification. Serine 264 bears the Phosphoserine mark.

The protein belongs to the MIP/aquaporin (TC 1.A.8) family. Homotetramer; each monomer provides an independent water pore. Component of the ankyrin-1 complex in the erythrocyte, composed of ANK1, RHCE, RHAG, SLC4A1, EPB42, GYPA, GYPB and AQP1. Interacts with EPHB2; involved in endolymph production in the inner ear. Identified in a complex with STOM. Interacts (via the N-terminal) with ANK1 (via ANK 1-5 repeats). Interacts (via the C-terminal) with EPB42.

Its subcellular location is the cell membrane. The catalysed reaction is H2O(in) = H2O(out). It catalyses the reaction nitric oxide(out) = nitric oxide(in). It carries out the reaction CO2(out) = CO2(in). The enzyme catalyses glycerol(in) = glycerol(out). The catalysed reaction is H2O2(out) = H2O2(in). It catalyses the reaction K(+)(in) = K(+)(out). It carries out the reaction Na(+)(in) = Na(+)(out). In terms of biological role, forms a water channel that facilitates the transport of water across cell membranes, playing a crucial role in water homeostasis in various tissues. Could also be permeable to small solutes including hydrogen peroxide, glycerol and gases such as amonnia (NH3), nitric oxide (NO) and carbon dioxide (CO2). Recruited to the ankyrin-1 complex, a multiprotein complex of the erythrocyte membrane, it could be part of a CO2 metabolon, linking facilitated diffusion of CO2 across the membrane, anion exchange of Cl(-)/HCO3(-) and interconversion of dissolved CO2 and carbonic acid in the cytosol. In vitro, it shows non-selective gated cation channel activity and may be permeable to cations like K(+) and Na(+) in vivo. The sequence is that of Aquaporin-1 from Canis lupus familiaris (Dog).